The sequence spans 86 residues: ATP synthase subunit c (86 aa).

A run of 2 helical transmembrane segments spans residues 8–28 and 66–86; these read VLAA…GAGI and GIYA…IGML.

The protein belongs to the ATPase C chain family. As to quaternary structure, F-type ATPases have 2 components, F(1) - the catalytic core - and F(0) - the membrane proton channel. F(1) has five subunits: alpha(3), beta(3), gamma(1), delta(1), epsilon(1). F(0) has three main subunits: a(1), b(2) and c(10-14). The alpha and beta chains form an alternating ring which encloses part of the gamma chain. F(1) is attached to F(0) by a central stalk formed by the gamma and epsilon chains, while a peripheral stalk is formed by the delta and b chains.

It is found in the cell membrane. In terms of biological role, f(1)F(0) ATP synthase produces ATP from ADP in the presence of a proton or sodium gradient. F-type ATPases consist of two structural domains, F(1) containing the extramembraneous catalytic core and F(0) containing the membrane proton channel, linked together by a central stalk and a peripheral stalk. During catalysis, ATP synthesis in the catalytic domain of F(1) is coupled via a rotary mechanism of the central stalk subunits to proton translocation. Its function is as follows. Key component of the F(0) channel; it plays a direct role in translocation across the membrane. A homomeric c-ring of between 10-14 subunits forms the central stalk rotor element with the F(1) delta and epsilon subunits. This is ATP synthase subunit c from Natranaerobius thermophilus (strain ATCC BAA-1301 / DSM 18059 / JW/NM-WN-LF).